A 159-amino-acid chain; its full sequence is MKVKLICVGKLKERYLKDGISEYQKRLSRFCQFEMIELTDERTPDKASFADNQLIMSKEAQRIHKKIGERDFVIALAIEGKQFPSETFSELISGVTVKGYSTITFIIGGSLGLDSIIKKRADMLMSFGLLTLPHQLMRLVLTEQIYRAFMITKGSPYHK.

S-adenosyl-L-methionine-binding positions include L76, G108, and 127–132; that span reads FGLLTL.

This sequence belongs to the RNA methyltransferase RlmH family. In terms of assembly, homodimer.

It localises to the cytoplasm. The catalysed reaction is pseudouridine(1915) in 23S rRNA + S-adenosyl-L-methionine = N(3)-methylpseudouridine(1915) in 23S rRNA + S-adenosyl-L-homocysteine + H(+). In terms of biological role, specifically methylates the pseudouridine at position 1915 (m3Psi1915) in 23S rRNA. This Streptococcus pyogenes serotype M5 (strain Manfredo) protein is Ribosomal RNA large subunit methyltransferase H.